The primary structure comprises 460 residues: Bifunctional protein GlmU (460 aa).

Residues 1-232 (MALNVVILAA…AIEVEGANNR (232 aa)) are pyrophosphorylase. UDP-N-acetyl-alpha-D-glucosamine contacts are provided by residues 8–11 (LAAG), lysine 22, glutamine 73, 78–79 (GT), 100–102 (YGD), glycine 137, glutamate 157, asparagine 172, and asparagine 230. Residue aspartate 102 participates in Mg(2+) binding. Asparagine 230 lines the Mg(2+) pocket. A linker region spans residues 233-253 (VQLAQLERAYQAREAEKLMLA). Positions 254 to 460 (GANLRDPSRI…GWQRPVKIKK (207 aa)) are N-acetyltransferase. UDP-N-acetyl-alpha-D-glucosamine contacts are provided by arginine 336 and lysine 354. Histidine 366 acts as the Proton acceptor in catalysis. UDP-N-acetyl-alpha-D-glucosamine-binding residues include tyrosine 369 and asparagine 380. Acetyl-CoA is bound by residues alanine 383, 389 to 390 (NY), serine 408, alanine 426, and arginine 443.

The protein in the N-terminal section; belongs to the N-acetylglucosamine-1-phosphate uridyltransferase family. In the C-terminal section; belongs to the transferase hexapeptide repeat family. In terms of assembly, homotrimer. Mg(2+) is required as a cofactor.

Its subcellular location is the cytoplasm. It catalyses the reaction alpha-D-glucosamine 1-phosphate + acetyl-CoA = N-acetyl-alpha-D-glucosamine 1-phosphate + CoA + H(+). The enzyme catalyses N-acetyl-alpha-D-glucosamine 1-phosphate + UTP + H(+) = UDP-N-acetyl-alpha-D-glucosamine + diphosphate. It functions in the pathway nucleotide-sugar biosynthesis; UDP-N-acetyl-alpha-D-glucosamine biosynthesis; N-acetyl-alpha-D-glucosamine 1-phosphate from alpha-D-glucosamine 6-phosphate (route II): step 2/2. Its pathway is nucleotide-sugar biosynthesis; UDP-N-acetyl-alpha-D-glucosamine biosynthesis; UDP-N-acetyl-alpha-D-glucosamine from N-acetyl-alpha-D-glucosamine 1-phosphate: step 1/1. The protein operates within bacterial outer membrane biogenesis; LPS lipid A biosynthesis. Functionally, catalyzes the last two sequential reactions in the de novo biosynthetic pathway for UDP-N-acetylglucosamine (UDP-GlcNAc). The C-terminal domain catalyzes the transfer of acetyl group from acetyl coenzyme A to glucosamine-1-phosphate (GlcN-1-P) to produce N-acetylglucosamine-1-phosphate (GlcNAc-1-P), which is converted into UDP-GlcNAc by the transfer of uridine 5-monophosphate (from uridine 5-triphosphate), a reaction catalyzed by the N-terminal domain. In Shewanella baltica (strain OS195), this protein is Bifunctional protein GlmU.